We begin with the raw amino-acid sequence, 126 residues long: uncharacterized protein (126 aa).

In terms of domain architecture, HIT spans 19-126 (IFERIIEGAV…LGGGLLGSIA (108 aa)). The Histidine triad motif signature appears at 111-115 (HLHIH).

This is an uncharacterized protein from Chlamydia muridarum (strain MoPn / Nigg).